The chain runs to 336 residues: MATLHAPAFELPEILNTKTNLADARIGAQVIECSDDFFAEAKRMLQFEAPIFVEDKFDDHGKWMDGWETRRKRHAGYDWCIVKLGVSGKISALDIDTTFFTGNYPASASLEACYAPNSDLTGAKWQSILENTELGPSQHHIFMVNNDAIFTHIRLNIFPDGGVARLRVYGDVHIQVTDHEQTLDLLALENGGRVIAYSDAHFGHPRNLINPGRGVNMGDGWETKRRRAPGYDWCILALGKSGKIEKIEIDTAHFKGNFPAEVSIQAVYLENATDAQLIPQSMFWSYLLEAQPMQMDHIHEYMNEILQHEKVSHIRINMIPDGGISRVRLWGKIAKS.

Belongs to the allantoicase family.

It catalyses the reaction allantoate + H2O = (S)-ureidoglycolate + urea. It participates in nitrogen metabolism; (S)-allantoin degradation; (S)-ureidoglycolate from allantoate (aminidohydrolase route): step 1/1. This chain is Probable allantoicase, found in Acinetobacter baumannii (strain SDF).